Here is a 341-residue protein sequence, read N- to C-terminus: Phenylalanine--tRNA ligase alpha subunit (341 aa).

Mg(2+) is bound at residue Glu254.

Belongs to the class-II aminoacyl-tRNA synthetase family. Phe-tRNA synthetase alpha subunit type 1 subfamily. In terms of assembly, tetramer of two alpha and two beta subunits. Mg(2+) is required as a cofactor.

Its subcellular location is the cytoplasm. It catalyses the reaction tRNA(Phe) + L-phenylalanine + ATP = L-phenylalanyl-tRNA(Phe) + AMP + diphosphate + H(+). The sequence is that of Phenylalanine--tRNA ligase alpha subunit from Chlorobium limicola (strain DSM 245 / NBRC 103803 / 6330).